An 86-amino-acid polypeptide reads, in one-letter code: MVLQNDIDLLNPPAELEKLKHKKKRLVQSPNSFFMDVKCQGCFNITTVFSHSQTVVVCPGCQTVLCQPTGGKARLTEGCSFRRKGD.

The C4-type zinc finger occupies 39–61 (CQGCFNITTVFSHSQTVVVCPGC).

The protein belongs to the eukaryotic ribosomal protein eS27 family. The cofactor is Zn(2+).

This is Small ribosomal subunit protein eS27 (RPS27) from Hordeum vulgare (Barley).